A 249-amino-acid polypeptide reads, in one-letter code: Aquaporin (249 aa).

Residues 1-11 (MTRKWIKKLQS) lie on the Cytoplasmic side of the membrane. The helical transmembrane segment at 12 to 32 (YIGEFFASFIFGFAVYTSIIG) threads the bilayer. The Extracellular segment spans residues 33-39 (SAQTGQS). The chain crosses the membrane as a helical span at residues 40 to 60 (AGPIIVALTIALSGVAIIYSF). Topologically, residues 61 to 83 (CDITVAHFNPAITFSAMCFRRLP) are cytoplasmic. The NPA motif lies at 69 to 71 (NPA). Residues 84 to 104 (FFGGIFIIIFQVAGFIIAGLA) form a helical membrane-spanning segment. Residues 105–133 (SVAVLPGKYKNKLEIARPKRVADNVSRGR) lie on the Extracellular side of the membrane. The chain crosses the membrane as a helical span at residues 134–154 (IFGTEFFLTAILVYVAFAVGV). At 155 to 179 (NPYTPPKDEHGDQLDPDEGLTEGRK) the chain is on the cytoplasmic side. Residues 180-200 (ITAPLAIGFTLGFCALLGIAS) traverse the membrane as a helical segment. Topologically, residues 201 to 223 (SGGAFNPGIVLSPMILTGTWDFW) are extracellular. Positions 206 to 208 (NPG) match the NPG motif. Residues 224–246 (WVYLLGQFSGGLLGGGLQRFLLY) traverse the membrane as a helical segment. Over 247–249 (KIF) the chain is Cytoplasmic.

Belongs to the MIP/aquaporin (TC 1.A.8) family.

It is found in the cell membrane. In terms of biological role, water channel required to facilitate the transport of water across membranes. Involved in osmotolerance. In Vairimorpha ceranae (strain BRL01) (Microsporidian parasite), this protein is Aquaporin (AQP).